The sequence spans 249 residues: uncharacterized protein (249 aa).

The segment covering 51 to 67 has biased composition (polar residues); sequence IPKDSLTNGKSSKNCMS. Disordered stretches follow at residues 51–131 and 205–240; these read IPKD…DSPV and YLNA…SSDG. The span at 93–106 shows a compositional bias: low complexity; that stretch reads SFQSMNSSMSSSTQ. Over residues 110–129 the composition is skewed to basic and acidic residues; sequence RILDEKNKDQSSSNENDRDS.

Belongs to the asfivirus DP238L family.

This is an uncharacterized protein from African swine fever virus (isolate Tick/Malawi/Lil 20-1/1983) (ASFV).